The chain runs to 125 residues: Holo-[acyl-carrier-protein] synthase (125 aa).

Residues aspartate 8 and glutamate 57 each contribute to the Mg(2+) site.

Belongs to the P-Pant transferase superfamily. AcpS family. Mg(2+) is required as a cofactor.

The protein localises to the cytoplasm. It catalyses the reaction apo-[ACP] + CoA = holo-[ACP] + adenosine 3',5'-bisphosphate + H(+). Functionally, transfers the 4'-phosphopantetheine moiety from coenzyme A to a Ser of acyl-carrier-protein. The sequence is that of Holo-[acyl-carrier-protein] synthase from Blochmanniella pennsylvanica (strain BPEN).